The primary structure comprises 609 residues: Dihydroxyacetone kinase (609 aa).

Positions 8–355 (YKQDLVHAHL…LDYPTKVPGW (348 aa)) constitute a DhaK domain. Residues 53 to 56 (GSGH), Lys-104, and Asp-109 contribute to the substrate site. The active-site Tele-hemiaminal-histidine intermediate is the His-232. A DhaL domain is found at 392–600 (STVKAVLESG…LAALVDGFAE (209 aa)). ATP is bound by residues 421–424 (DGDC), 467–468 (TS), 523–524 (TL), and 585–587 (DPG).

It belongs to the dihydroxyacetone kinase (DAK) family.

The enzyme catalyses dihydroxyacetone + ATP = dihydroxyacetone phosphate + ADP + H(+). It carries out the reaction D-glyceraldehyde + ATP = D-glyceraldehyde 3-phosphate + ADP + H(+). Its pathway is polyol metabolism; glycerol fermentation; glycerone phosphate from glycerol (oxidative route): step 2/2. Functionally, catalyzes both the phosphorylation of dihydroxyacetone and of glyceraldehyde. This is Dihydroxyacetone kinase (DAK) from Pichia angusta (Yeast).